The sequence spans 35 residues: Mu-theraphotoxin-Pn3b (35 aa).

Cystine bridges form between cysteine 2-cysteine 16, cysteine 9-cysteine 21, and cysteine 15-cysteine 28.

Belongs to the neurotoxin 10 (Hwtx-1) family. 28 (Jztx-11) subfamily. Expressed by the venom gland.

Its subcellular location is the secreted. Functionally, gating-modifier toxin that targets voltage-gated sodium channels with a preferential activity on Nav1.7/SCN9A. On Nav1.7/SCN9A, the toxin acts by shifting the voltage-dependence of activation to more depolarized potentials, whereas it does not cause significant effect on the voltage-dependence of activation on other sodium channels. Minor effects are observed on the voltage-dependence of steady-state fast inactivation for all sodium channels tested (Nav1.1/SCN1A-Nav1.8/SCN10A). By testing the toxin on channel chimera, it has been shown to interact with the S3-S4 linkers in DII and DIV domains of Nav1.7/SCN9A. In vivo, the toxin dose-dependently reduces OD1-induced spontaneous pain behaviors. The polypeptide is Mu-theraphotoxin-Pn3b (Pamphobeteus nigricolor (Giant blue bloom tarantula)).